A 246-amino-acid polypeptide reads, in one-letter code: Deoxycytidylate 5-hydroxymethyltransferase (246 aa).

C148 is a catalytic residue.

Belongs to the thymidylate synthase family.

It catalyses the reaction dCMP + (6R)-5,10-methylene-5,6,7,8-tetrahydrofolate + H2O = 5-hydroxymethyl-dCMP + (6S)-5,6,7,8-tetrahydrofolate. The chain is Deoxycytidylate 5-hydroxymethyltransferase (42) from Enterobacteria phage T4 (Bacteriophage T4).